Here is a 957-residue protein sequence, read N- to C-terminus: MNSVEAVEKILNYSFVNKTLLKEAITQKSPLFDRLEFFGDSILEVAFTNYICHTYPNLKVKELRDLRTANVSNEKFARIAVNHNLHHFLLLQNPSLFKKVKNFAEAVRKEDDPVPYGGLVKAPKILADTLESIAATVFIDVNYDVKRLWEIFRSLLEPIYTPDDLLLQPKLPFLTLFRLADKHGSESTSGIRKMTTSTKILLRNKDCLDVDLEDVKGKSFEICSTELFSLSTVSENSLTDEMSQEEVVIDEDSPNVEPEDVKGKLFEICYTRKLQIQTGSSGNPLTYEMTTKQMVVDKDSLHVEPVNGRGELIEICTKNKWPRPIFSVQEEKGPKNEPKFVCSVKIEIPNIEGTFHMKGDIKSKKKQAENSLAYHMIRALESSLVSLVISNLQKPKSLDEKNNPLLFSSEMDSSVEAVEKILNYSFVNKTLLKELLTHNNSPLFQGLMFVGESALSLAFTKHLYLTYPMLEPKDLSVLRDANTCHDKYACVAVKKGIYQSFIGSVPKPEKMTTDFIELMGKEDDPYRVVKAPKILVNLLAGVAGAVYIDVKYNVQRLLEIFRVLLEPIYTLDDLRMQLKQPFLMLFRLADKHGKQIDFRYSKDGGSRKNIAQVYMDDMFIASGCAKRIDTAKLLAAEEAIQKLSECMPIEKIIHQDNLDGEVIQTGSSSLLTAFENPLTEEMTQEQMVIDEDSLDVEWKLFETEELQIQTGSSSMSTVSENPLPCEITPTKMVIGEVSPHVELEDVKGKSFEISSTETSSLPIAFENPLTNELTQEQMVIDENSPYVEPVDTKGKLFESCSVESSSLPTTSENPSTYEMTTKQMVVDKDSPHVEPEDEKGKLFEICAKNKWPNPIFSVEEERGQQNEQKIVCSVKIEIPNIEGTFHIKGDAKPTKKEAENSSADHMIRALESSVMSLVITNLQMHENLDGKKKNLQMKESLNENKTLLHSTKRRRRL.

One can recognise an RNase III 1 domain in the interval 4 to 142 (VEAVEKILNY…IAATVFIDVN (139 aa)). Residues 307 to 382 (NGRGELIEIC…AYHMIRALES (76 aa)) enclose the DRBM 1 domain. One can recognise an RNase III 2 domain in the interval 415–551 (VEAVEKILNY…VAGAVYIDVK (137 aa)). DRBM domains follow at residues 566 to 645 (EPIY…KLSE) and 837 to 912 (DEKG…ALES).

Ribonuclease that cleaves double-stranded RNA (dsRNA). The protein is Ribonuclease 3-like protein 3 (RTL3) of Arabidopsis thaliana (Mouse-ear cress).